Consider the following 333-residue polypeptide: Salivary glue protein Sgs-3 (333 aa).

An N-terminal signal peptide occupies residues 1–23 (MKLTIATALVGILLIACAHVANG). The segment at 51-285 (TCRPPTTTRC…ATARPTSKPC (235 aa)) is disordered. A compositionally biased stretch (pro residues) spans 60–73 (CPPPTTTRCPPPTR). Low complexity predominate over residues 74–88 (PAECTATTKRPTARP). Over residues 89–277 (TTKRATTRRT…TKRATTKRAT (189 aa)) the composition is skewed to basic residues.

This is Salivary glue protein Sgs-3 (Sgs3) from Drosophila erecta (Fruit fly).